The primary structure comprises 488 residues: Palmitoyltransferase ZDHHC14 (488 aa).

Topologically, residues 1–60 (MPPGGGGPMKDCEYSQISTHSSSPMESPHKKKKIAARRKWEVFPGRNKFFCNGRIMMARQ) are cytoplasmic. A helical membrane pass occupies residues 61 to 81 (TGVFYLTLVLILVTSGLFFAF). Residues 82–89 (DCPYLAVK) lie on the Lumenal side of the membrane. The chain crosses the membrane as a helical span at residues 90 to 110 (ITPAIPAVAGILFFFVMGTLL). The Cytoplasmic segment spans residues 111-208 (RTSFSDPGVL…GNCVGKRNYR (98 aa)). Residues 165–215 (KYCFTCKIFRPPRASHCSLCDNCVERFDHHCPWVGNCVGKRNYRFFYMFIL) enclose the DHHC domain. Catalysis depends on C195, which acts as the S-palmitoyl cysteine intermediate. The chain crosses the membrane as a helical span at residues 209 to 229 (FFYMFILSLSFLTVFIFAFVI). Topologically, residues 230 to 255 (THVILRSQQTGFLNALKDSPASVLEA) are lumenal. A helical membrane pass occupies residues 256–276 (VVCFFSVWSIVGLSGFHTYLI). The Cytoplasmic segment spans residues 277–488 (SSNQTTNEDI…VRGLVKLSSV (212 aa)). Phosphoserine is present on S455.

Belongs to the DHHC palmitoyltransferase family. ERF2/ZDHHC9 subfamily. Widely expressed.

It localises to the endoplasmic reticulum membrane. The protein localises to the golgi apparatus. Its subcellular location is the golgi stack membrane. The catalysed reaction is L-cysteinyl-[protein] + hexadecanoyl-CoA = S-hexadecanoyl-L-cysteinyl-[protein] + CoA. Functionally, palmitoyltransferase that could catalyze the addition of palmitate onto various protein substrates. May have a palmitoyltransferase activity toward the beta-2 adrenergic receptor/ADRB2 and thereby regulate G protein-coupled receptor signaling. May play a role in cell differentiation and apoptosis. The sequence is that of Palmitoyltransferase ZDHHC14 from Homo sapiens (Human).